The chain runs to 539 residues: MPENVASRSGPPAAGPGNRGKGAYQDRDKPAQIRFSNISAAKAVADAIRTSLGPKGMDKMIQDGKGDVTITNDGATILKQMQVLHPAARMLVELSKAQDIEAGDGTTSVVIIAGSLLDSCTKLLQKGIHPTIISESFQKALEKGLEILTDMSRPVQLSDRETLLNSATTSLNSKVVSQYSSLLSPMSVNAVMKVIDPATATSVDLRDIKIVKKLGGTIDDCELVEGLVLTQKVANSGITRVEKAKIGLIQFCLSAPKTDMDNQIVVSDYAQMDRVLREERAYILNLVKQIKKTGCNVLLIQKSILRDALSDLALHFLNKMKIMVVKDIEREDIEFICKTIGTKPVAHIDQFTPDMLGSAELAEEVSLNGSGKLFKITGCTSPGKTVTIVVRGSNKLVIEEAERSIHDALCVIRCLVKKRALIAGGGAPEIELALRLTEYSRTLSGMESYCVRAFADAMEVIPSTLAENAGLNPISTVTELRNRHAQGEKTTGINVRKGGISNILEEMVVQPLLVSVSALTLATETVRSILKIDDVVNTR.

Positions 1-28 (MPENVASRSGPPAAGPGNRGKGAYQDRD) are disordered. Arg-19 carries the post-translational modification Omega-N-methylarginine. The residue at position 21 (Lys-21) is an N6-acetyllysine. The residue at position 36 (Ser-36) is a Phosphoserine. Gly-53 contributes to the ADP binding site. Position 53 (Gly-53) interacts with ATP. Residue Asp-104 participates in Mg(2+) binding. ADP contacts are provided by Gly-105, Thr-106, Thr-107, Ser-108, Asn-172, Ser-173, and Lys-174. Gly-105 and Thr-106 together coordinate ATP. Lys-174 contributes to the ATP binding site. Residues Ser-184 and Ser-202 each carry the phosphoserine modification. Lys-288, Lys-302, Lys-319, and Lys-326 each carry N6-acetyllysine. Gly-425 serves as a coordination point for ADP. Residue Ser-444 is modified to Phosphoserine. An ADP-binding site is contributed by Gln-510.

The protein belongs to the TCP-1 chaperonin family. In terms of assembly, component of the chaperonin-containing T-complex (TRiC), a hexadecamer composed of two identical back-to-back stacked rings enclosing a protein folding chamber. Each ring is made up of eight different subunits: TCP1/CCT1, CCT2, CCT3, CCT4, CCT5, CCT6A/CCT6, CCT7, CCT8. Interacts with PACRG. Interacts with DNAAF4. Interacts with DLEC1.

The protein localises to the cytoplasm. It is found in the melanosome. It localises to the cytoskeleton. The protein resides in the microtubule organizing center. Its subcellular location is the centrosome. The protein localises to the cilium basal body. The catalysed reaction is ATP + H2O = ADP + phosphate + H(+). Functionally, component of the chaperonin-containing T-complex (TRiC), a molecular chaperone complex that assists the folding of actin, tubulin and other proteins upon ATP hydrolysis. The TRiC complex mediates the folding of WRAP53/TCAB1, thereby regulating telomere maintenance. As part of the TRiC complex may play a role in the assembly of BBSome, a complex involved in ciliogenesis regulating transports vesicles to the cilia. The protein is T-complex protein 1 subunit delta (Cct4) of Rattus norvegicus (Rat).